The following is a 497-amino-acid chain: uncharacterized protein (497 aa).

Ca(2+) is bound by residues Asp12, Thr13, and Cys52. Residue Cys52 is the Nucleophile of the active site. The residue at position 52 (Cys52) is a 3-oxoalanine (Cys). His102 is an active-site residue. Ca(2+) is bound by residues Asp284 and His285.

It belongs to the sulfatase family. The cofactor is Ca(2+). In terms of processing, the conversion to 3-oxoalanine (also known as C-formylglycine, FGly), of a serine or cysteine residue in prokaryotes and of a cysteine residue in eukaryotes, is critical for catalytic activity.

This is an uncharacterized protein from Escherichia coli (strain K12).